Reading from the N-terminus, the 269-residue chain is 3-methyl-2-oxobutanoate hydroxymethyltransferase (269 aa).

Residues D50 and D89 each coordinate Mg(2+). Residues 50–51, D89, and K118 contribute to the 3-methyl-2-oxobutanoate site; that span reads DS. E120 is a binding site for Mg(2+). The active-site Proton acceptor is E187.

The protein belongs to the PanB family. As to quaternary structure, homodecamer; pentamer of dimers. It depends on Mg(2+) as a cofactor.

The protein localises to the cytoplasm. It carries out the reaction 3-methyl-2-oxobutanoate + (6R)-5,10-methylene-5,6,7,8-tetrahydrofolate + H2O = 2-dehydropantoate + (6S)-5,6,7,8-tetrahydrofolate. It participates in cofactor biosynthesis; (R)-pantothenate biosynthesis; (R)-pantoate from 3-methyl-2-oxobutanoate: step 1/2. Functionally, catalyzes the reversible reaction in which hydroxymethyl group from 5,10-methylenetetrahydrofolate is transferred onto alpha-ketoisovalerate to form ketopantoate. The sequence is that of 3-methyl-2-oxobutanoate hydroxymethyltransferase from Nitrosomonas eutropha (strain DSM 101675 / C91 / Nm57).